Here is a 65-residue protein sequence, read N- to C-terminus: Large ribosomal subunit protein uL29 (65 aa).

This sequence belongs to the universal ribosomal protein uL29 family.

This is Large ribosomal subunit protein uL29 from Desulforamulus reducens (strain ATCC BAA-1160 / DSM 100696 / MI-1) (Desulfotomaculum reducens).